Reading from the N-terminus, the 274-residue chain is Methionine aminopeptidase B (274 aa).

Position 102 (His102) interacts with substrate. 3 residues coordinate a divalent metal cation: Asp120, Asp131, and His194. His201 lines the substrate pocket. 2 residues coordinate a divalent metal cation: Glu227 and Glu258.

The protein belongs to the peptidase M24A family. Methionine aminopeptidase type 1 subfamily. In terms of assembly, monomer. Co(2+) is required as a cofactor. It depends on Zn(2+) as a cofactor. Requires Mn(2+) as cofactor. Fe(2+) serves as cofactor.

The catalysed reaction is Release of N-terminal amino acids, preferentially methionine, from peptides and arylamides.. Its function is as follows. Removes the N-terminal methionine from nascent proteins. The N-terminal methionine is often cleaved when the second residue in the primary sequence is small and uncharged (Met-Ala-, Cys, Gly, Pro, Ser, Thr, or Val). Requires deformylation of the N(alpha)-formylated initiator methionine before it can be hydrolyzed. This chain is Methionine aminopeptidase B, found in Synechocystis sp. (strain ATCC 27184 / PCC 6803 / Kazusa).